A 108-amino-acid chain; its full sequence is ATP-dependent Clp protease adapter protein ClpS (108 aa).

The segment covering 1-15 (MPRESSPDSHHEHGV) has biased composition (basic and acidic residues). The tract at residues 1-24 (MPRESSPDSHHEHGVAVEPARPEV) is disordered.

This sequence belongs to the ClpS family. In terms of assembly, binds to the N-terminal domain of the chaperone ClpA.

Involved in the modulation of the specificity of the ClpAP-mediated ATP-dependent protein degradation. The polypeptide is ATP-dependent Clp protease adapter protein ClpS (Stenotrophomonas maltophilia (strain R551-3)).